Consider the following 133-residue polypeptide: Small ribosomal subunit protein uS8c (133 aa).

This sequence belongs to the universal ribosomal protein uS8 family. In terms of assembly, part of the 30S ribosomal subunit.

It localises to the plastid. It is found in the chloroplast. In terms of biological role, one of the primary rRNA binding proteins, it binds directly to 16S rRNA central domain where it helps coordinate assembly of the platform of the 30S subunit. In Chlorokybus atmophyticus (Soil alga), this protein is Small ribosomal subunit protein uS8c (rps8).